The following is a 212-amino-acid chain: HTH-type transcriptional repressor NicS (212 aa).

Residues 14–74 (DRTRDNILKA…SVLEHIYASF (61 aa)) form the HTH tetR-type domain. The H-T-H motif DNA-binding region spans 37-56 (RIEQISTLAKSNDRMIYYYF).

Its pathway is cofactor degradation; nicotinate degradation [regulation]. In terms of biological role, transcriptional repressor for the nicAB operon, encoding the upper aerobic nicotinate degradation pathway. Acts under non-induced conditions: repression of the nicAB operon becomes alleviated in presence of either nicotinate or 6-hydroxynicotinate (6HNA). The polypeptide is HTH-type transcriptional repressor NicS (nicS) (Pseudomonas putida (strain ATCC 47054 / DSM 6125 / CFBP 8728 / NCIMB 11950 / KT2440)).